Consider the following 167-residue polypeptide: Small ribosomal subunit protein uS5 (167 aa).

The 64-residue stretch at 19 to 82 folds into the S5 DRBM domain; sequence LTEKVLHINR…EAARKNMISC (64 aa).

It belongs to the universal ribosomal protein uS5 family. In terms of assembly, part of the 30S ribosomal subunit. Contacts proteins S4 and S8.

With S4 and S12 plays an important role in translational accuracy. Its function is as follows. Located at the back of the 30S subunit body where it stabilizes the conformation of the head with respect to the body. This Protochlamydia amoebophila (strain UWE25) protein is Small ribosomal subunit protein uS5.